A 161-amino-acid polypeptide reads, in one-letter code: Large ribosomal subunit protein uL16 (161 aa).

Residues 140–161 form a disordered region; the sequence is LNKGNYKPAKTPVTADDSESSS.

It belongs to the universal ribosomal protein uL16 family. As to quaternary structure, part of the 50S ribosomal subunit.

In terms of biological role, binds 23S rRNA and is also seen to make contacts with the A and possibly P site tRNAs. This chain is Large ribosomal subunit protein uL16, found in Prochlorococcus marinus (strain NATL2A).